Consider the following 193-residue polypeptide: Ion-translocating oxidoreductase complex subunit A (193 aa).

A run of 6 helical transmembrane segments spans residues valine 5–leucine 25, isoleucine 39–valine 59, isoleucine 63–valine 83, leucine 102–leucine 122, alanine 134–leucine 154, and serine 171–valine 191.

This sequence belongs to the NqrDE/RnfAE family. In terms of assembly, the complex is composed of six subunits: RnfA, RnfB, RnfC, RnfD, RnfE and RnfG.

It is found in the cell inner membrane. Functionally, part of a membrane-bound complex that couples electron transfer with translocation of ions across the membrane. In Pseudoalteromonas translucida (strain TAC 125), this protein is Ion-translocating oxidoreductase complex subunit A.